The sequence spans 273 residues: Dermonecrotic toxin LdSicTox-alphaIB3aiv (273 aa).

H5 is a catalytic residue. Residues E25 and D27 each contribute to the Mg(2+) site. H41 (nucleophile) is an active-site residue. Intrachain disulfides connect C45–C51 and C47–C190. Mg(2+) is bound at residue D85.

This sequence belongs to the arthropod phospholipase D family. Class II subfamily. Mg(2+) serves as cofactor. As to expression, expressed by the venom gland.

It localises to the secreted. It carries out the reaction an N-(acyl)-sphingosylphosphocholine = an N-(acyl)-sphingosyl-1,3-cyclic phosphate + choline. It catalyses the reaction an N-(acyl)-sphingosylphosphoethanolamine = an N-(acyl)-sphingosyl-1,3-cyclic phosphate + ethanolamine. The enzyme catalyses a 1-acyl-sn-glycero-3-phosphocholine = a 1-acyl-sn-glycero-2,3-cyclic phosphate + choline. The catalysed reaction is a 1-acyl-sn-glycero-3-phosphoethanolamine = a 1-acyl-sn-glycero-2,3-cyclic phosphate + ethanolamine. In terms of biological role, dermonecrotic toxins cleave the phosphodiester linkage between the phosphate and headgroup of certain phospholipids (sphingolipid and lysolipid substrates), forming an alcohol (often choline) and a cyclic phosphate. This toxin acts on sphingomyelin (SM). It may also act on ceramide phosphoethanolamine (CPE), lysophosphatidylcholine (LPC) and lysophosphatidylethanolamine (LPE), but not on lysophosphatidylserine (LPS), and lysophosphatidylglycerol (LPG). It acts by transphosphatidylation, releasing exclusively cyclic phosphate products as second products. Induces dermonecrosis, hemolysis, increased vascular permeability, edema, inflammatory response, and platelet aggregation. This is Dermonecrotic toxin LdSicTox-alphaIB3aiv from Loxosceles deserta (Desert recluse spider).